The chain runs to 304 residues: Foldase protein PrsA (304 aa).

A signal peptide spans 1–19; sequence MKKKLLSVAAVASVFTLAA. Residue C20 is the site of N-palmitoyl cysteine attachment. Residue C20 is the site of S-diacylglycerol cysteine attachment. A PpiC domain is found at 140 to 231; the sequence is KVEVKASHIL…FGYHIIKVTD (92 aa). The segment at 285–304 is disordered; it reads FDLDKQEQQQMQQQMQQQQQ. The segment covering 292–304 has biased composition (low complexity); that stretch reads QQQMQQQMQQQQQ.

It belongs to the PrsA family.

The protein resides in the cell membrane. The enzyme catalyses [protein]-peptidylproline (omega=180) = [protein]-peptidylproline (omega=0). Functionally, plays a major role in protein secretion by helping the post-translocational extracellular folding of several secreted proteins. This chain is Foldase protein PrsA, found in Exiguobacterium sibiricum (strain DSM 17290 / CCUG 55495 / CIP 109462 / JCM 13490 / 255-15).